Consider the following 602-residue polypeptide: DNA mismatch repair protein MutL (602 aa).

The protein belongs to the DNA mismatch repair MutL/HexB family.

Functionally, this protein is involved in the repair of mismatches in DNA. It is required for dam-dependent methyl-directed DNA mismatch repair. May act as a 'molecular matchmaker', a protein that promotes the formation of a stable complex between two or more DNA-binding proteins in an ATP-dependent manner without itself being part of a final effector complex. The polypeptide is DNA mismatch repair protein MutL (Geotalea uraniireducens (strain Rf4) (Geobacter uraniireducens)).